We begin with the raw amino-acid sequence, 120 residues long: Chaperonin GroEL (120 aa).

23 to 27 (DGTTT) contacts ATP.

Belongs to the chaperonin (HSP60) family. As to quaternary structure, forms a cylinder of 14 subunits composed of two heptameric rings stacked back-to-back. Interacts with the co-chaperonin GroES.

The protein localises to the cytoplasm. It catalyses the reaction ATP + H2O + a folded polypeptide = ADP + phosphate + an unfolded polypeptide.. Together with its co-chaperonin GroES, plays an essential role in assisting protein folding. The GroEL-GroES system forms a nano-cage that allows encapsulation of the non-native substrate proteins and provides a physical environment optimized to promote and accelerate protein folding. The polypeptide is Chaperonin GroEL (Mycolicibacterium vaccae (Mycobacterium vaccae)).